Reading from the N-terminus, the 115-residue chain is Nucleoid-associated protein Pro_0020 (115 aa).

It belongs to the YbaB/EbfC family. In terms of assembly, homodimer.

The protein localises to the cytoplasm. The protein resides in the nucleoid. Its function is as follows. Binds to DNA and alters its conformation. May be involved in regulation of gene expression, nucleoid organization and DNA protection. The protein is Nucleoid-associated protein Pro_0020 of Prochlorococcus marinus (strain SARG / CCMP1375 / SS120).